Reading from the N-terminus, the 135-residue chain is L-ectoine synthase (135 aa).

The protein belongs to the ectoine synthase family.

The enzyme catalyses (2S)-4-acetamido-2-aminobutanoate = L-ectoine + H2O. The protein operates within amine and polyamine biosynthesis; ectoine biosynthesis; L-ectoine from L-aspartate 4-semialdehyde: step 3/3. In terms of biological role, catalyzes the circularization of gamma-N-acetyl-alpha,gamma-diaminobutyric acid (ADABA) to ectoine (1,4,5,6-tetrahydro-2-methyl-4-pyrimidine carboxylic acid), which is an excellent osmoprotectant. The sequence is that of L-ectoine synthase from Saccharopolyspora erythraea (strain ATCC 11635 / DSM 40517 / JCM 4748 / NBRC 13426 / NCIMB 8594 / NRRL 2338).